The following is a 303-amino-acid chain: Glycine--tRNA ligase alpha subunit (303 aa).

It belongs to the class-II aminoacyl-tRNA synthetase family. As to quaternary structure, tetramer of two alpha and two beta subunits.

The protein localises to the cytoplasm. The enzyme catalyses tRNA(Gly) + glycine + ATP = glycyl-tRNA(Gly) + AMP + diphosphate. This chain is Glycine--tRNA ligase alpha subunit, found in Escherichia fergusonii (strain ATCC 35469 / DSM 13698 / CCUG 18766 / IAM 14443 / JCM 21226 / LMG 7866 / NBRC 102419 / NCTC 12128 / CDC 0568-73).